The sequence spans 600 residues: NADH-quinone oxidoreductase subunit C/D (600 aa).

Positions 1 to 190 (MVNNMTDLTA…DPFELTKAKQ (190 aa)) are NADH dehydrogenase I subunit C. Positions 214 to 600 (DFMFLNLGPN…IDFVMSDVDR (387 aa)) are NADH dehydrogenase I subunit D.

This sequence in the N-terminal section; belongs to the complex I 30 kDa subunit family. It in the C-terminal section; belongs to the complex I 49 kDa subunit family. In terms of assembly, NDH-1 is composed of 13 different subunits. Subunits NuoB, CD, E, F, and G constitute the peripheral sector of the complex.

The protein resides in the cell inner membrane. The catalysed reaction is a quinone + NADH + 5 H(+)(in) = a quinol + NAD(+) + 4 H(+)(out). NDH-1 shuttles electrons from NADH, via FMN and iron-sulfur (Fe-S) centers, to quinones in the respiratory chain. The immediate electron acceptor for the enzyme in this species is believed to be ubiquinone. Couples the redox reaction to proton translocation (for every two electrons transferred, four hydrogen ions are translocated across the cytoplasmic membrane), and thus conserves the redox energy in a proton gradient. The sequence is that of NADH-quinone oxidoreductase subunit C/D from Salmonella paratyphi A (strain ATCC 9150 / SARB42).